The following is an 80-amino-acid chain: Exodeoxyribonuclease 7 small subunit (80 aa).

The protein belongs to the XseB family. In terms of assembly, heterooligomer composed of large and small subunits.

The protein localises to the cytoplasm. It carries out the reaction Exonucleolytic cleavage in either 5'- to 3'- or 3'- to 5'-direction to yield nucleoside 5'-phosphates.. In terms of biological role, bidirectionally degrades single-stranded DNA into large acid-insoluble oligonucleotides, which are then degraded further into small acid-soluble oligonucleotides. In Citrobacter koseri (strain ATCC BAA-895 / CDC 4225-83 / SGSC4696), this protein is Exodeoxyribonuclease 7 small subunit.